Here is a 357-residue protein sequence, read N- to C-terminus: UDP-N-acetylglucosamine--N-acetylmuramyl-(pentapeptide) pyrophosphoryl-undecaprenol N-acetylglucosamine transferase (357 aa).

UDP-N-acetyl-alpha-D-glucosamine is bound by residues threonine 13–glycine 15, asparagine 125, arginine 161, serine 189, isoleucine 243, and glutamine 288.

The protein belongs to the glycosyltransferase 28 family. MurG subfamily.

It is found in the cell inner membrane. The enzyme catalyses di-trans,octa-cis-undecaprenyl diphospho-N-acetyl-alpha-D-muramoyl-L-alanyl-D-glutamyl-meso-2,6-diaminopimeloyl-D-alanyl-D-alanine + UDP-N-acetyl-alpha-D-glucosamine = di-trans,octa-cis-undecaprenyl diphospho-[N-acetyl-alpha-D-glucosaminyl-(1-&gt;4)]-N-acetyl-alpha-D-muramoyl-L-alanyl-D-glutamyl-meso-2,6-diaminopimeloyl-D-alanyl-D-alanine + UDP + H(+). It participates in cell wall biogenesis; peptidoglycan biosynthesis. In terms of biological role, cell wall formation. Catalyzes the transfer of a GlcNAc subunit on undecaprenyl-pyrophosphoryl-MurNAc-pentapeptide (lipid intermediate I) to form undecaprenyl-pyrophosphoryl-MurNAc-(pentapeptide)GlcNAc (lipid intermediate II). The protein is UDP-N-acetylglucosamine--N-acetylmuramyl-(pentapeptide) pyrophosphoryl-undecaprenol N-acetylglucosamine transferase of Bordetella parapertussis (strain 12822 / ATCC BAA-587 / NCTC 13253).